A 79-amino-acid polypeptide reads, in one-letter code: Small ribosomal subunit protein bS18 (79 aa).

Belongs to the bacterial ribosomal protein bS18 family. Part of the 30S ribosomal subunit. Forms a tight heterodimer with protein bS6.

In terms of biological role, binds as a heterodimer with protein bS6 to the central domain of the 16S rRNA, where it helps stabilize the platform of the 30S subunit. The chain is Small ribosomal subunit protein bS18 from Blochmanniella pennsylvanica (strain BPEN).